The sequence spans 208 residues: MASPDDPLRSDHMAKEPVEDTDPSTLSFAMSDKYPIQDTGLPKAKECDTVNSNCPPNSDDQPQGEENDFPDSTKDPLSGVSRNQPCKDRKGSCSCPSCSPRAPTISDLLNDQDLLDTIRIKLDPCHPTVKNWRNFASKWGMPYDELCFLEQRPQSPTLEFLFRNSQRTVGQLMELCRLYHRADVEKILRRWVDEEWPHRGHSDSSMHF.

Residues 1-18 (MASPDDPLRSDHMAKEPV) show a composition bias toward basic and acidic residues. The interval 1 to 99 (MASPDDPLRS…KGSCSCPSCS (99 aa)) is disordered. Over residues 49 to 61 (TVNSNCPPNSDDQ) the composition is skewed to polar residues. The region spanning 116-195 (DTIRIKLDPC…KILRRWVDEE (80 aa)) is the Death domain.

Binds EDAR. Self-associates and binds TRAF1, TRAF2 and TRAF3.

The protein localises to the cytoplasm. In terms of biological role, adapter protein that interacts with EDAR DEATH domain and couples the receptor to EDA signaling pathway during morphogenesis of ectodermal organs. Mediates the activation of NF-kappa-B. This is Ectodysplasin-A receptor-associated adapter protein (Edaradd) from Mus musculus (Mouse).